A 1018-amino-acid polypeptide reads, in one-letter code: Thrombospondin type-1 domain-containing protein 4 (1018 aa).

The N-terminal stretch at Met-1–Pro-26 is a signal peptide. Disordered stretches follow at residues Lys-34–Val-56, His-116–Ala-240, and Ser-534–Gln-623. The TSP type-1 1 domain occupies Pro-54 to Pro-307. A compositionally biased stretch (basic residues) spans Gln-187–Ser-199. Polar residues predominate over residues His-216–Gly-230. Composition is skewed to basic and acidic residues over residues Gln-558–Ser-573 and Arg-592–Asp-603. 5 consecutive TSP type-1 domains span residues Cys-676–Ser-737, Trp-739–Pro-792, Cys-793–Thr-851, Gly-852–Pro-911, and Cys-912–Val-968. The PLAC domain occupies Val-971–Ala-1008.

Isoform 2 interacts with FBN1. Isoform 2 may interact with TGFB1. In terms of tissue distribution, both isoforms are expressed in the embryo from 7 dpc through 17. Isoform 1 is widely expressed in adult tissues. Isoform 2 is detected in brain, spinal cord, eye, kidney, stomach and uterus. Mainly observed in fibrillar extracellular matrices in elastic tissues (at protein level).

The protein localises to the secreted. It is found in the extracellular space. It localises to the extracellular matrix. Its function is as follows. Promotes FBN1 matrix assembly. Attenuates TGFB signaling, possibly by accelerating the sequestration of large latent complexes of TGFB or active TGFB by FBN1 microfibril assembly, thereby negatively regulating the expression of TGFB regulatory targets, such as POSTN. The polypeptide is Thrombospondin type-1 domain-containing protein 4 (Thsd4) (Mus musculus (Mouse)).